The sequence spans 199 residues: Pyridoxal 5'-phosphate synthase subunit PdxT (199 aa).

51–53 (GES) serves as a coordination point for L-glutamine. The Nucleophile role is filled by Cys-83. L-glutamine-binding positions include Arg-110 and 137 to 138 (IR). Residues His-172 and Glu-174 each act as charge relay system in the active site.

Belongs to the glutaminase PdxT/SNO family. In terms of assembly, in the presence of PdxS, forms a dodecamer of heterodimers. Only shows activity in the heterodimer.

It carries out the reaction aldehydo-D-ribose 5-phosphate + D-glyceraldehyde 3-phosphate + L-glutamine = pyridoxal 5'-phosphate + L-glutamate + phosphate + 3 H2O + H(+). The catalysed reaction is L-glutamine + H2O = L-glutamate + NH4(+). The protein operates within cofactor biosynthesis; pyridoxal 5'-phosphate biosynthesis. Its function is as follows. Catalyzes the hydrolysis of glutamine to glutamate and ammonia as part of the biosynthesis of pyridoxal 5'-phosphate. The resulting ammonia molecule is channeled to the active site of PdxS. The polypeptide is Pyridoxal 5'-phosphate synthase subunit PdxT (Thermoplasma volcanium (strain ATCC 51530 / DSM 4299 / JCM 9571 / NBRC 15438 / GSS1)).